The following is a 649-amino-acid chain: Protein translocase subunit SecA 2 (649 aa).

ATP-binding positions include Q105, 123–127 (GEGKT), and D535.

It belongs to the SecA family. As to quaternary structure, monomer and homodimer. Part of the essential Sec protein translocation apparatus which comprises SecA, SecYEG and auxiliary proteins SecDF-YajC and YidC.

The protein resides in the cell inner membrane. It localises to the cytoplasm. It carries out the reaction ATP + H2O + cellular proteinSide 1 = ADP + phosphate + cellular proteinSide 2.. In terms of biological role, part of the Sec protein translocase complex. Interacts with the SecYEG preprotein conducting channel. Has a central role in coupling the hydrolysis of ATP to the transfer of proteins into and across the cell membrane, serving both as a receptor for the preprotein-SecB complex and as an ATP-driven molecular motor driving the stepwise translocation of polypeptide chains across the membrane. The chain is Protein translocase subunit SecA 2 from Magnetococcus marinus (strain ATCC BAA-1437 / JCM 17883 / MC-1).